The chain runs to 677 residues: UPF0313 protein RPA0679 (677 aa).

The 267-residue stretch at 335-601 folds into the Radical SAM core domain; that stretch reads AWDMIKTSVT…VEAIKGLRQR (267 aa). Cys-349, Cys-353, and Cys-356 together coordinate [4Fe-4S] cluster. The tract at residues 635-677 is disordered; sequence RPDQLVPAHQPPGTGKAAGTRRPVRGDGPKPQRFTTKGVRLVK.

It belongs to the UPF0313 family. It depends on [4Fe-4S] cluster as a cofactor.

The protein is UPF0313 protein RPA0679 of Rhodopseudomonas palustris (strain ATCC BAA-98 / CGA009).